The primary structure comprises 443 residues: Glutamate--tRNA ligase 2 (443 aa).

The 'HIGH' region motif lies at Pro7–Asn17. Positions Lys236–Arg240 match the 'KMSKS' region motif. Lys239 provides a ligand contact to ATP.

It belongs to the class-I aminoacyl-tRNA synthetase family. Glutamate--tRNA ligase type 1 subfamily. In terms of assembly, monomer.

The protein resides in the cytoplasm. The enzyme catalyses tRNA(Glu) + L-glutamate + ATP = L-glutamyl-tRNA(Glu) + AMP + diphosphate. Catalyzes the attachment of glutamate to tRNA(Glu) in a two-step reaction: glutamate is first activated by ATP to form Glu-AMP and then transferred to the acceptor end of tRNA(Glu). The sequence is that of Glutamate--tRNA ligase 2 from Ehrlichia canis (strain Jake).